The following is a 220-amino-acid chain: FMN-dependent NADH:quinone oxidoreductase 1 (220 aa).

An FMN-binding site is contributed by 18–20 (SVS).

This sequence belongs to the azoreductase type 1 family. In terms of assembly, homodimer. FMN serves as cofactor.

It carries out the reaction 2 a quinone + NADH + H(+) = 2 a 1,4-benzosemiquinone + NAD(+). The catalysed reaction is N,N-dimethyl-1,4-phenylenediamine + anthranilate + 2 NAD(+) = 2-(4-dimethylaminophenyl)diazenylbenzoate + 2 NADH + 2 H(+). Functionally, quinone reductase that provides resistance to thiol-specific stress caused by electrophilic quinones. Also exhibits azoreductase activity. Catalyzes the reductive cleavage of the azo bond in aromatic azo compounds to the corresponding amines. The protein is FMN-dependent NADH:quinone oxidoreductase 1 of Bacillus anthracis.